The primary structure comprises 94 residues: MMSTKGITLFLCLLLLALATSVNGGQGTRRSRMTRALHGGRPSARYDAPYCSQEEVRECHDDCSGNPVRDACQCAYDPAGSPACDCYCVEPWRR.

Positions 1 to 24 (MMSTKGITLFLCLLLLALATSVNG) are cleaved as a signal peptide. The propeptide occupies 25 to 44 (GQGTRRSRMTRALHGGRPSA).

Post-translationally, contains 4 disulfide bonds. As to expression, expressed by the venom duct.

The protein resides in the secreted. Its function is as follows. Probable neurotoxin with unknown target. Possibly targets ion channels. In Californiconus californicus (California cone), this protein is Conotoxin Cal22a.